The chain runs to 534 residues: High affinity cGMP-specific 3',5'-cyclic phosphodiesterase 9A (534 aa).

The PDEase domain maps to 175-496; sequence PRRDVPTYPK…EHYEELKQLD (322 aa). Catalysis depends on histidine 251, which acts as the Proton donor. 251–255 is a 3',5'-cyclic GMP binding site; that stretch reads HNFRH. Zn(2+) contacts are provided by histidine 255, histidine 291, and aspartate 292. Aspartate 292 contributes to the 3',5'-cyclic GMP binding site. Aspartate 292 contacts Mg(2+). Serine 318 is modified (phosphoserine). Residues aspartate 401, tyrosine 423, and 451–452 contribute to the 3',5'-cyclic GMP site; that span reads AQ. Aspartate 401 lines the Zn(2+) pocket. The tract at residues 500–534 is disordered; that stretch reads KELQKKTESLTSGAPENTTEKNRDAKDSEGHSPPN. Over residues 517-534 the composition is skewed to basic and acidic residues; that stretch reads TTEKNRDAKDSEGHSPPN.

The protein belongs to the cyclic nucleotide phosphodiesterase family. PDE9 subfamily. As to quaternary structure, homodimer. It depends on Zn(2+) as a cofactor. Mg(2+) is required as a cofactor. As to expression, highly expressed in kidney. Lower levels in liver, lung and brain. Widely expressed in brain, with highest expression in cerebellar Purkinje cells. Present in heart (at protein level).

Its subcellular location is the cell projection. It is found in the ruffle membrane. It localises to the cytoplasm. The protein localises to the perinuclear region. The protein resides in the golgi apparatus. Its subcellular location is the endoplasmic reticulum. It is found in the cell membrane. It localises to the sarcolemma. It carries out the reaction 3',5'-cyclic GMP + H2O = GMP + H(+). It participates in purine metabolism; 3',5'-cyclic GMP degradation; GMP from 3',5'-cyclic GMP: step 1/1. Inhibited by SCH 51866 and moderately, by zaprinast. Specifically inhibited by PF-04447943 (6-[(3S,4S)-4-methyl-1-(pyrimidin-2-ylmethyl)pyrrolidin-3-yl]-1-(tetrahydro-2H-pyran-4-yl)-1,5-dihydro-4H-pyrazolo[3,4-d]pyrimidin-4-one). Specifically hydrolyzes the second messenger cGMP, which is a key regulator of many important physiological processes. Highly specific: compared to other members of the cyclic nucleotide phosphodiesterase family, has the highest affinity and selectivity for cGMP. Specifically regulates natriuretic-peptide-dependent cGMP signaling in heart, acting as a regulator of cardiac hypertrophy in myocytes and muscle. Does not regulate nitric oxide-dependent cGMP in heart. Additional experiments are required to confirm whether its ability to hydrolyze natriuretic-peptide-dependent cGMP is specific to heart or is a general feature of the protein. In brain, involved in cognitive function, such as learning and long-term memory. The protein is High affinity cGMP-specific 3',5'-cyclic phosphodiesterase 9A (Pde9a) of Mus musculus (Mouse).